The following is a 440-amino-acid chain: Xylose isomerase (440 aa).

Catalysis depends on residues H100 and D103. Mg(2+) is bound by residues E231, E267, H270, D295, D306, D308, and D338.

The protein belongs to the xylose isomerase family. Homotetramer. Mg(2+) is required as a cofactor.

Its subcellular location is the cytoplasm. The catalysed reaction is alpha-D-xylose = alpha-D-xylulofuranose. The protein is Xylose isomerase of Burkholderia vietnamiensis (strain G4 / LMG 22486) (Burkholderia cepacia (strain R1808)).